A 100-amino-acid polypeptide reads, in one-letter code: uncharacterized protein (100 aa).

The next 2 membrane-spanning stretches (helical) occupy residues 17 to 37 and 78 to 98; these read IIIL…SVSF and MVDK…TIPF.

It localises to the endoplasmic reticulum membrane. This is an uncharacterized protein from Saccharomyces cerevisiae (strain ATCC 204508 / S288c) (Baker's yeast).